Consider the following 384-residue polypeptide: Glutamate 5-kinase (384 aa).

Residue Lys-24 participates in ATP binding. The substrate site is built by Ser-64, Asp-149, and Asn-161. Residues 181–182 and 223–229 each bind ATP; these read TD and TGGMRTK. One can recognise a PUA domain in the interval 288–370; sequence PGAILIDAGA…RDIQPLLGYT (83 aa).

This sequence belongs to the glutamate 5-kinase family.

The protein resides in the cytoplasm. The enzyme catalyses L-glutamate + ATP = L-glutamyl 5-phosphate + ADP. The protein operates within amino-acid biosynthesis; L-proline biosynthesis; L-glutamate 5-semialdehyde from L-glutamate: step 1/2. In terms of biological role, catalyzes the transfer of a phosphate group to glutamate to form L-glutamate 5-phosphate. The polypeptide is Glutamate 5-kinase (Xylella fastidiosa (strain 9a5c)).